We begin with the raw amino-acid sequence, 60 residues long: Photosystem II reaction center protein L (60 aa).

A helical transmembrane segment spans residues S39 to F59.

It belongs to the PsbL family. PSII is composed of 1 copy each of membrane proteins PsbA, PsbB, PsbC, PsbD, PsbE, PsbF, PsbH, PsbI, PsbJ, PsbK, PsbL, PsbM, PsbT, PsbX, PsbY, PsbZ, Psb30/Ycf12, at least 3 peripheral proteins of the oxygen-evolving complex and a large number of cofactors. It forms dimeric complexes.

It localises to the plastid. It is found in the chloroplast thylakoid membrane. Its function is as follows. One of the components of the core complex of photosystem II (PSII). PSII is a light-driven water:plastoquinone oxidoreductase that uses light energy to abstract electrons from H(2)O, generating O(2) and a proton gradient subsequently used for ATP formation. It consists of a core antenna complex that captures photons, and an electron transfer chain that converts photonic excitation into a charge separation. This subunit is found at the monomer-monomer interface and is required for correct PSII assembly and/or dimerization. This Oedogonium cardiacum (Filamentous green alga) protein is Photosystem II reaction center protein L.